Reading from the N-terminus, the 218-residue chain is Pyrrolidone-carboxylate peptidase 2 (218 aa).

Catalysis depends on residues E83, C146, and H170.

This sequence belongs to the peptidase C15 family. In terms of assembly, homotetramer.

Its subcellular location is the cytoplasm. The enzyme catalyses Release of an N-terminal pyroglutamyl group from a polypeptide, the second amino acid generally not being Pro.. Functionally, removes 5-oxoproline from various penultimate amino acid residues except L-proline. The chain is Pyrrolidone-carboxylate peptidase 2 from Photorhabdus laumondii subsp. laumondii (strain DSM 15139 / CIP 105565 / TT01) (Photorhabdus luminescens subsp. laumondii).